A 208-amino-acid chain; its full sequence is ATP-dependent Clp protease proteolytic subunit (208 aa).

Ser-107 functions as the Nucleophile in the catalytic mechanism. Residue His-132 is part of the active site.

It belongs to the peptidase S14 family. In terms of assembly, fourteen ClpP subunits assemble into 2 heptameric rings which stack back to back to give a disk-like structure with a central cavity, resembling the structure of eukaryotic proteasomes.

It localises to the cytoplasm. It catalyses the reaction Hydrolysis of proteins to small peptides in the presence of ATP and magnesium. alpha-casein is the usual test substrate. In the absence of ATP, only oligopeptides shorter than five residues are hydrolyzed (such as succinyl-Leu-Tyr-|-NHMec, and Leu-Tyr-Leu-|-Tyr-Trp, in which cleavage of the -Tyr-|-Leu- and -Tyr-|-Trp bonds also occurs).. Cleaves peptides in various proteins in a process that requires ATP hydrolysis. Has a chymotrypsin-like activity. Plays a major role in the degradation of misfolded proteins. This is ATP-dependent Clp protease proteolytic subunit from Methylorubrum populi (strain ATCC BAA-705 / NCIMB 13946 / BJ001) (Methylobacterium populi).